We begin with the raw amino-acid sequence, 324 residues long: Beta-ketoacyl-[acyl-carrier-protein] synthase III (324 aa).

Residues Cys-112 and His-249 contribute to the active site. Positions 250–254 (QANRR) are ACP-binding. Asn-279 is a catalytic residue.

The protein belongs to the thiolase-like superfamily. FabH family. In terms of assembly, homodimer.

Its subcellular location is the cytoplasm. The enzyme catalyses malonyl-[ACP] + acetyl-CoA + H(+) = 3-oxobutanoyl-[ACP] + CO2 + CoA. The protein operates within lipid metabolism; fatty acid biosynthesis. Functionally, catalyzes the condensation reaction of fatty acid synthesis by the addition to an acyl acceptor of two carbons from malonyl-ACP. Catalyzes the first condensation reaction which initiates fatty acid synthesis and may therefore play a role in governing the total rate of fatty acid production. Possesses both acetoacetyl-ACP synthase and acetyl transacylase activities. Its substrate specificity determines the biosynthesis of branched-chain and/or straight-chain of fatty acids. The protein is Beta-ketoacyl-[acyl-carrier-protein] synthase III of Streptococcus pyogenes serotype M1.